The following is a 310-amino-acid chain: L-lactate dehydrogenase (310 aa).

NAD(+) is bound by residues 10-11 (MV), D32, Y62, and 76-77 (GV). Residues Q79, R85, and 117–120 (NPVD) contribute to the substrate site. Residues 115 to 117 (ATN) and S140 contribute to the NAD(+) site. 145–148 (DTAR) lines the substrate pocket. Residues R150 and H165 each contribute to the beta-D-fructose 1,6-bisphosphate site. H172 acts as the Proton acceptor in catalysis. At Y218 the chain carries Phosphotyrosine. Position 227 (T227) interacts with substrate.

It belongs to the LDH/MDH superfamily. LDH family. Homotetramer.

Its subcellular location is the cytoplasm. It catalyses the reaction (S)-lactate + NAD(+) = pyruvate + NADH + H(+). It functions in the pathway fermentation; pyruvate fermentation to lactate; (S)-lactate from pyruvate: step 1/1. With respect to regulation, allosterically activated by fructose 1,6-bisphosphate (FBP). Functionally, catalyzes the conversion of lactate to pyruvate. This is L-lactate dehydrogenase from Thermus thermophilus (strain ATCC 27634 / DSM 579 / HB8).